Here is a 426-residue protein sequence, read N- to C-terminus: Enolase (426 aa).

Position 165 (Q165) interacts with (2R)-2-phosphoglycerate. The active-site Proton donor is E209. Residues D244, E287, and D313 each coordinate Mg(2+). K338, R367, S368, and K389 together coordinate (2R)-2-phosphoglycerate. K338 serves as the catalytic Proton acceptor.

This sequence belongs to the enolase family. The cofactor is Mg(2+).

The protein resides in the cytoplasm. The protein localises to the secreted. Its subcellular location is the cell surface. The catalysed reaction is (2R)-2-phosphoglycerate = phosphoenolpyruvate + H2O. It participates in carbohydrate degradation; glycolysis; pyruvate from D-glyceraldehyde 3-phosphate: step 4/5. Catalyzes the reversible conversion of 2-phosphoglycerate (2-PG) into phosphoenolpyruvate (PEP). It is essential for the degradation of carbohydrates via glycolysis. The chain is Enolase from Methanococcus maripaludis (strain C5 / ATCC BAA-1333).